A 466-amino-acid polypeptide reads, in one-letter code: Vimentin (466 aa).

Low complexity predominate over residues 1-13; the sequence is MSTRSVSSSSYRR. A disordered region spans residues 1–31; the sequence is MSTRSVSSSSYRRMFGGPGTASRPSSTRSYV. Residue Ser2 is modified to N-acetylserine. A head region spans residues 2-95; that stretch reads STRSVSSSSY…FSLADAINTE (94 aa). The residue at position 5 (Ser5) is a Phosphoserine. Residue Ser7 is modified to Phosphoserine; by PKA and PKC; alternate. The O-linked (GlcNAc) serine; alternate glycan is linked to Ser7. Residue Ser8 is modified to Phosphoserine. Residues Ser9 and Ser10 each carry the phosphoserine; by PKC modification. Thr20 is subject to Phosphothreonine. Residue Ser25 is modified to Phosphoserine; by PKA and PKC. Ser26 is subject to Phosphoserine; by PKC. An O-linked (GlcNAc) threonine glycan is attached at Thr33. Ser34 carries O-linked (GlcNAc) serine; alternate glycosylation. Phosphoserine; by PKC; alternate is present on Ser34. Residue Ser39 is modified to Phosphoserine; by CaMK2, PKA, PKC and ROCK2. At Ser42 the chain carries Phosphoserine; by PKC. Ser49 is modified (phosphoserine). Position 53 is a phosphotyrosine (Tyr53). Ser55 carries the phosphoserine modification. Ser56 carries the phosphoserine; by CDK5 and CDK1 modification. Position 61 is a phosphotyrosine (Tyr61). Ser66 is subject to Phosphoserine; by PKA and PKC. Position 72 is a phosphoserine; by AURKB and ROCK2 (Ser72). Ser83 bears the Phosphoserine; by CaMK2 mark. The residue at position 87 (Ser87) is a Phosphoserine. The segment at 96–131 is coil 1A; that stretch reads FKNTRTNEKVELQELNDRFANYIDKVRFLEQQNKIL. Positions 96-131 form a coiled coil; that stretch reads FKNTRTNEKVELQELNDRFANYIDKVRFLEQQNKIL. The region spanning 103–411 is the IF rod domain; sequence EKVELQELND…KLLEGEESRI (309 aa). Residue Lys104 forms a Glycyl lysine isopeptide (Lys-Gly) (interchain with G-Cter in SUMO2) linkage. Tyr117 is modified (phosphotyrosine). Lys120, Lys129, and Lys139 each carry N6-acetyllysine; alternate. An N6-succinyllysine; alternate mark is found at Lys120 and Lys129. Glycyl lysine isopeptide (Lys-Gly) (interchain with G-Cter in SUMO2); alternate cross-links involve residues Lys120, Lys129, and Lys139. The segment at 132-153 is linker 1; sequence LAELEQLKGQGKSRLGDLYEEE. Ser144 is subject to Phosphoserine. Positions 154-245 form a coiled coil; it reads MRELRRQVDQ…KLHDEEIQEL (92 aa). The coil 1B stretch occupies residues 154–245; it reads MRELRRQVDQ…KLHDEEIQEL (92 aa). Lys168 is modified (N6-acetyllysine). Lys188 carries the N6-acetyllysine; alternate modification. Residue Lys188 is modified to N6-succinyllysine; alternate. Ser214 is subject to Phosphoserine. Lys223 carries the post-translational modification N6-acetyllysine; alternate. Lys223 participates in a covalent cross-link: Glycyl lysine isopeptide (Lys-Gly) (interchain with G-Cter in SUMO2); alternate. Ser226 is modified (phosphoserine). The residue at position 235 (Lys235) is an N6-acetyllysine. The linker 12 stretch occupies residues 246–268; the sequence is QAQIQEQHVQIDMDVSKPDLTAA. Residue Lys262 forms a Glycyl lysine isopeptide (Lys-Gly) (interchain with G-Cter in SUMO2) linkage. The tract at residues 269–407 is coil 2; it reads LRDVRQQYES…ATYRKLLEGE (139 aa). At Lys294 the chain carries N6-acetyllysine; alternate. Position 294 is an N6-succinyllysine; alternate (Lys294). Lys294 is covalently cross-linked (Glycyl lysine isopeptide (Lys-Gly) (interchain with G-Cter in SUMO2); alternate). Ser299 is modified (phosphoserine). Positions 303 to 407 form a coiled coil; that stretch reads NRNNDALRQA…ATYRKLLEGE (105 aa). A Glycyl lysine isopeptide (Lys-Gly) (interchain with G-Cter in SUMO2) cross-link involves residue Lys313. The [IL]-x-C-x-x-[DE] motif signature appears at 326-329; sequence LTCE. The residue at position 373 (Lys373) is an N6-acetyllysine; alternate. Lys373 participates in a covalent cross-link: Glycyl lysine isopeptide (Lys-Gly) (interchain with G-Cter in SUMO2); alternate. The segment at 408 to 466 is tail; the sequence is ESRISLPLPNFSSLNLRETNLDSLPLVDTHSKRTLLIKTVETRDGQVINETSQHHDDLE. 4 positions are modified to phosphoserine: Ser409, Ser412, Ser419, and Ser420. At Thr426 the chain carries Phosphothreonine. The residue at position 430 (Ser430) is a Phosphoserine. Thr436 bears the Phosphothreonine mark. Residue Ser438 is modified to Phosphoserine. Lys439 is covalently cross-linked (Glycyl lysine isopeptide (Lys-Gly) (interchain with G-Cter in SUMO2)). N6-acetyllysine; alternate is present on Lys445. N6-succinyllysine; alternate is present on Lys445. Residue Lys445 forms a Glycyl lysine isopeptide (Lys-Gly) (interchain with G-Cter in SUMO2); alternate linkage. Lys445 participates in a covalent cross-link: Glycyl lysine isopeptide (Lys-Gly) (interchain with G-Cter in SUMO1); alternate. Phosphothreonine occurs at positions 446 and 458. Phosphoserine is present on Ser459.

This sequence belongs to the intermediate filament family. Homomer assembled from elementary dimers. Identified in complexes that contain VIM, EZR, AHNAK, BFSP1, BFSP2, ANK2, PLEC, PRX and spectrin. Interacts with BCAS3. Interacts with LGSN. Interacts with SYNM. Interacts (via rod region) with PLEC (via CH 1 domain). Interacts with STK33. Interacts with LARP6. Interacts with RAB8B. Interacts with TOR1A; the interaction associates TOR1A with the cytoskeleton. Interacts with TOR1AIP1. Interacts with TOR1AIP1. Interacts with DIAPH1. Interacts with EPPK1; interaction is dependent of higher-order structure of intermediate filament. Interacts with the non-receptor tyrosine kinase SRMS; the interaction leads to phosphorylation of VIM. Interacts with NOD2. Interacts (via head region) with CORO1C. Interacts with HDGF. Interacts with PRKCE (via phorbol-ester/DAG-type 2 domain). Interacts with BFSP2. Interacts with PPL. Interacts with PKP1 and PKP2. Interacts with SCRIB (via PDZ domains); the interaction protects SCRIB from proteasomal degradation and facilitates SCRIB localization to intermediate filaments, the interaction is reduced by cell contact inhibition. One of the most prominent phosphoproteins in various cells of mesenchymal origin. Phosphorylation is enhanced during cell division, at which time vimentin filaments are significantly reorganized. Phosphorylation by PKN1 inhibits the formation of filaments. Filament disassembly during mitosis is promoted by phosphorylation at Ser-55 as well as by nestin. Phosphorylated at Ser-56 by CDK5 during neutrophil secretion in the cytoplasm. Phosphorylated by STK33. Phosphorylated on tyrosine residues by SRMS. Post-translationally, S-nitrosylation is induced by interferon-gamma and oxidatively-modified low-densitity lipoprotein (LDL(ox)) possibly implicating the iNOS-S100A8/9 transnitrosylase complex.

The protein resides in the cytoplasm. It localises to the cytoskeleton. Its subcellular location is the nucleus matrix. It is found in the cell membrane. In terms of biological role, vimentins are class-III intermediate filaments found in various non-epithelial cells, especially mesenchymal cells. Vimentin is attached to the nucleus, endoplasmic reticulum, and mitochondria, either laterally or terminally. Plays a role in cell directional movement, orientation, cell sheet organization and Golgi complex polarization at the cell migration front. Protects SCRIB from proteasomal degradation and facilitates its localization to intermediate filaments in a cell contact-mediated manner. Involved with LARP6 in the stabilization of type I collagen mRNAs for CO1A1 and CO1A2. This Bos taurus (Bovine) protein is Vimentin (VIM).